Reading from the N-terminus, the 56-residue chain is MAFHLLNLFLSAGTSSEAATSSAVGMIGSFLAAGALIVAPAAAALIWVSQKDALSR.

The helical transmembrane segment at 27-47 (IGSFLAAGALIVAPAAAALIW) threads the bilayer.

The protein belongs to the PsbX family. Type 2 subfamily. As to quaternary structure, PSII consists of a core antenna complex that captures photons, and an electron transfer chain that converts photonic excitation into a charge separation. PSII forms dimeric complexes.

It localises to the cellular thylakoid membrane. Involved in the binding and/or turnover of quinones at the Q(B) site of Photosystem II. The sequence is that of Photosystem II reaction center X protein from Prochlorococcus marinus (strain NATL2A).